A 780-amino-acid polypeptide reads, in one-letter code: Protein SAV (780 aa).

ATP is bound by residues 253–260 (GPPGTGKT) and 528–535 (GPPGTGKT).

This sequence belongs to the AAA ATPase family. CDC48 subfamily.

Its function is as follows. Not yet known, shows ATPase activity. The chain is Protein SAV (sav) from Sulfolobus acidocaldarius (strain ATCC 33909 / DSM 639 / JCM 8929 / NBRC 15157 / NCIMB 11770).